A 424-amino-acid chain; its full sequence is Cyclin-dependent kinase D-1 (424 aa).

Residues 19 to 299 (YLKREVLGEG…AQQALEHRYF (281 aa)) form the Protein kinase domain. ATP is bound by residues 25-33 (LGEGTYGVV) and Lys48. Position 29 is a phosphothreonine (Thr29). Phosphotyrosine is present on Tyr30. Asp141 (proton acceptor) is an active-site residue. Ser168 carries the phosphoserine modification. Position 174 is a phosphothreonine (Thr174). Disordered regions lie at residues 303 to 337 (PAPTKPSQLPRPPPKGDSGNNKIPDLNLQDGPVVL) and 359 to 424 (ADRT…GYTE). Positions 359 to 374 (ADRTEEHPSGARHMDD) are enriched in basic and acidic residues.

The protein belongs to the protein kinase superfamily. CMGC Ser/Thr protein kinase family. CDC2/CDKX subfamily. In terms of assembly, interacts with CYCH1-1. As to expression, expressed in actively dividing cells of roots, leaves and shoots. Expressed in the intercalary meristem and the elongation zone of internodes.

It localises to the nucleus. The catalysed reaction is L-seryl-[protein] + ATP = O-phospho-L-seryl-[protein] + ADP + H(+). It catalyses the reaction L-threonyl-[protein] + ATP = O-phospho-L-threonyl-[protein] + ADP + H(+). The enzyme catalyses [DNA-directed RNA polymerase] + ATP = phospho-[DNA-directed RNA polymerase] + ADP + H(+). Its function is as follows. CDK-activating kinase that may control G1/S phase progression. May control the rate of cell differentiation to accomplish proper development of organs, or in response to a changing environment. Forms a complex with cyclin CYCH1-1 that phosphorylates CDKA-1 and the C-terminal domain (CTD) of the large subunit of RNA polymerase II. The protein is Cyclin-dependent kinase D-1 (CDKD-1) of Oryza sativa subsp. japonica (Rice).